The primary structure comprises 286 residues: Phosphatidylserine decarboxylase proenzyme (286 aa).

Catalysis depends on charge relay system; for autoendoproteolytic cleavage activity residues aspartate 90, histidine 147, and serine 252. The active-site Schiff-base intermediate with substrate; via pyruvic acid; for decarboxylase activity is the serine 252. Position 252 is a pyruvic acid (Ser); by autocatalysis (serine 252).

The protein belongs to the phosphatidylserine decarboxylase family. PSD-B subfamily. Prokaryotic type I sub-subfamily. As to quaternary structure, heterodimer of a large membrane-associated beta subunit and a small pyruvoyl-containing alpha subunit. Pyruvate is required as a cofactor. In terms of processing, is synthesized initially as an inactive proenzyme. Formation of the active enzyme involves a self-maturation process in which the active site pyruvoyl group is generated from an internal serine residue via an autocatalytic post-translational modification. Two non-identical subunits are generated from the proenzyme in this reaction, and the pyruvate is formed at the N-terminus of the alpha chain, which is derived from the carboxyl end of the proenzyme. The autoendoproteolytic cleavage occurs by a canonical serine protease mechanism, in which the side chain hydroxyl group of the serine supplies its oxygen atom to form the C-terminus of the beta chain, while the remainder of the serine residue undergoes an oxidative deamination to produce ammonia and the pyruvoyl prosthetic group on the alpha chain. During this reaction, the Ser that is part of the protease active site of the proenzyme becomes the pyruvoyl prosthetic group, which constitutes an essential element of the active site of the mature decarboxylase.

It is found in the cell membrane. It carries out the reaction a 1,2-diacyl-sn-glycero-3-phospho-L-serine + H(+) = a 1,2-diacyl-sn-glycero-3-phosphoethanolamine + CO2. Its pathway is phospholipid metabolism; phosphatidylethanolamine biosynthesis; phosphatidylethanolamine from CDP-diacylglycerol: step 2/2. In terms of biological role, catalyzes the formation of phosphatidylethanolamine (PtdEtn) from phosphatidylserine (PtdSer). The protein is Phosphatidylserine decarboxylase proenzyme of Ectopseudomonas mendocina (strain ymp) (Pseudomonas mendocina).